Reading from the N-terminus, the 1291-residue chain is 1-phosphatidylinositol 4,5-bisphosphate phosphodiesterase gamma-1 (1291 aa).

Alanine 2 is modified (N-acetylalanine). A PH 1 domain is found at 27–142 (RSLEVGTVMT…WIRGLTWLME (116 aa)). Residues 152 to 187 (QIERWLRKQFYSVDRNREDRISAKDLKNMLSQVNYR) form the EF-hand domain. The Ca(2+) site is built by aspartate 165, asparagine 167, glutamate 169, arginine 171, and aspartate 176. The PI-PLC X-box domain maps to 320 to 464 (DTMNNPLSHY…LKRKILIKHK (145 aa)). Residues histidine 335 and histidine 380 contribute to the active site. A PH 2; first part domain is found at 489 to 523 (SIKNGILYLEDPVNHEWYPHYFVLTSSKIYYSEET). Tyrosine 506 bears the Phosphotyrosine mark. The disordered stretch occupies residues 522–544 (ETSSDQGNEDEEEPKEASGSTEL). SH2 domains are found at residues 550 to 657 (WFHG…SEPV) and 668 to 756 (WYHA…RYPI). Tyrosine 771 carries the post-translational modification Phosphotyrosine; by SYK. Residues tyrosine 775 and tyrosine 783 each carry the phosphotyrosine modification. Tyrosine 783 is modified (phosphotyrosine; by ITK, SYK and TXK). The SH3 domain maps to 791-851 (TFKCAVKALF…PSNYVEEMVS (61 aa)). Positions 895–931 (FVFSISMASVAHWSLDVAADSQEELQDWVKKIREVAQ) constitute a PH 2; second part domain. A PI-PLC Y-box domain is found at 953 to 1070 (LSELVVYCRP…GYVLQPSVMR (118 aa)). Tyrosine 977 carries the phosphotyrosine modification. Residues 1071–1194 (DEAFDPFDKS…TGYRAVPLKN (124 aa)) form the C2 domain. Residues serine 1222, serine 1228, and serine 1249 each carry the phosphoserine modification. Tyrosine 1254 carries the phosphotyrosine modification. Position 1264 is a phosphoserine (serine 1264). The disordered stretch occupies residues 1271–1291 (HFDGRDRRTPRRTRVNGDNRL).

In terms of assembly, interacts with AGAP2 via its SH3 domain. Interacts (via SH2 domain) with RET. Interacts with FLT1 (tyrosine-phosphorylated). Interacts (via SH2 domain) with FGFR1, FGFR2, FGFR3 and FGFR4 (phosphorylated). Interacts with LAT (phosphorylated) upon TCR activation. Interacts (via SH3 domain) with the Pro-rich domain of TNK1. Associates with BLNK, VAV1, GRB2 and NCK1 in a B-cell antigen receptor-dependent fashion. Interacts with CBLB in activated T-cells; which inhibits phosphorylation. Interacts with SHB. Interacts (via SH3 domain) with the Arg/Gly-rich-flanked Pro-rich domains of KHDRBS1/SAM68. This interaction is selectively regulated by arginine methylation of KHDRBS1/SAM68. Interacts with INPP5D/SHIP1, THEMIS and CLNK. Interacts with AXL, FLT4 and KIT. Interacts with RALGPS1. Interacts (via the SH2 domains) with VIL1 (phosphorylated at C-terminus tyrosine phosphorylation sites). Interacts (via SH2 domain) with PDGFRA and PDGFRB (tyrosine phosphorylated). Interacts with PIP5K1C. Interacts with NTRK1 and NTRK2 (phosphorylated upon ligand-binding). Interacts with SYK; activates PLCG1. Interacts with GRB2, LAT and THEMIS upon TCR activation in thymocytes. Interacts with TESPA1; the association is increased with prolonged stimulation of the TCR and may facilitate the assembly of the LAT signalosome. Interacts (via C-terminal proline-rich domain (PRD)) with PLCG1 (via SH3 domain); this interaction leads to guanine nucleotide exchange from PlCG1 to DNM1 and enhances DNM1-dependent endocytosis. Requires Ca(2+) as cofactor. Post-translationally, ubiquitinated by CBLB in activated T-cells. Tyrosine phosphorylated in response to signaling via activated FLT3, KIT and PDGFRA. Tyrosine phosphorylated by activated FGFR1, FGFR2, FGFR3 and FGFR4. Tyrosine phosphorylated by activated FLT1 and KDR. Tyrosine phosphorylated by activated PDGFRB. The receptor-mediated activation of PLCG1 involves its phosphorylation by tyrosine kinases, in response to ligation of a variety of growth factor receptors and immune system receptors. For instance, SYK phosphorylates and activates PLCG1 in response to ligation of the B-cell receptor. May be dephosphorylated by PTPRJ. Phosphorylated by ITK and TXK on Tyr-783 upon TCR activation in T-cells.

The protein localises to the cell projection. Its subcellular location is the lamellipodium. It localises to the ruffle. It carries out the reaction a 1,2-diacyl-sn-glycero-3-phospho-(1D-myo-inositol-4,5-bisphosphate) + H2O = 1D-myo-inositol 1,4,5-trisphosphate + a 1,2-diacyl-sn-glycerol + H(+). It catalyses the reaction a 1,2-diacyl-sn-glycero-3-phospho-(1D-myo-inositol) + H2O = 1D-myo-inositol 1-phosphate + a 1,2-diacyl-sn-glycerol + H(+). Activated by phosphorylation on tyrosine residues. In terms of biological role, mediates the production of the second messenger molecules diacylglycerol (DAG) and inositol 1,4,5-trisphosphate (IP3). Plays an important role in the regulation of intracellular signaling cascades. Becomes activated in response to ligand-mediated activation of receptor-type tyrosine kinases, such as PDGFRA, PDGFRB, EGFR, FGFR1, FGFR2, FGFR3 and FGFR4. Plays a role in actin reorganization and cell migration. Guanine nucleotide exchange factor that binds the GTPase DNM1 and catalyzes the dissociation of GDP, allowing a GTP molecule to bind in its place, therefore enhancing DNM1-dependent endocytosis. This Bos taurus (Bovine) protein is 1-phosphatidylinositol 4,5-bisphosphate phosphodiesterase gamma-1.